A 173-amino-acid polypeptide reads, in one-letter code: MKKNRLLFRVIILLILSGAVGFTLYQGYFSKEEKMEIGKEAPNFVVTDLEGKKIELKDFKGKGVFLNFWGTWCKPCEKEMPYMNELYPKYKEKGVEIIALDADETDIAVKNFVKQYDLKFPVAIDKGGEIIKTYGVIPLPTSFLIDKDGKVIQEIKGEQTKEQLEEYLKKITP.

The helical; Signal-anchor for type II membrane protein transmembrane segment at 10-29 threads the bilayer; it reads VIILLILSGAVGFTLYQGYF. Residues 35–173 enclose the Thioredoxin domain; it reads MEIGKEAPNF…LEEYLKKITP (139 aa). A disulfide bond links cysteine 73 and cysteine 76.

The protein belongs to the thioredoxin family. ResA subfamily.

It is found in the cell membrane. It participates in protein modification; cytochrome c assembly. Thiol-disulfide oxidoreductase which is required in disulfide reduction during c-type cytochrome synthesis. May accept reducing equivalents from CcdA, leading to breakage of disulfide bonds in apocytochrome c; following this reduction heme can be covalently attached. This Bacillus cereus (strain ATCC 10987 / NRS 248) protein is Thiol-disulfide oxidoreductase ResA.